Consider the following 717-residue polypeptide: Methylcrotonoyl-CoA carboxylase subunit alpha, mitochondrial (717 aa).

The transit peptide at Met1–Gly38 directs the protein to the mitochondrion. Residues Ile45 to Lys490 enclose the Biotin carboxylation domain. Lys159 is a binding site for ATP. The ATP-grasp domain maps to Lys163–Ala360. N6-acetyllysine is present on residues Lys180 and Lys193. ATP is bound by residues Lys201 and Gly207 to Gly208. Position 233 is an N6-acetyllysine (Lys233). Residues His251, His278, and Glu318 each contribute to the ATP site. Arg335 is an active-site residue. Position 490 is an N6-acetyllysine (Lys490). Position 577 is an N6-acetyllysine; alternate (Lys577). Residue Lys577 is modified to N6-succinyllysine; alternate. The Biotinyl-binding domain occupies Ser622–Glu711. Lys677 carries the post-translational modification N6-biotinyllysine.

Probably a dodecamer composed of six biotin-containing alpha subunits (MCCC1) and six beta (MCCC2) subunits. Interacts (via the biotin carboxylation domain) with SIRT4. Biotin is required as a cofactor. Post-translationally, acetylated.

The protein localises to the mitochondrion matrix. It catalyses the reaction 3-methylbut-2-enoyl-CoA + hydrogencarbonate + ATP = 3-methyl-(2E)-glutaconyl-CoA + ADP + phosphate + H(+). It participates in amino-acid degradation; L-leucine degradation; (S)-3-hydroxy-3-methylglutaryl-CoA from 3-isovaleryl-CoA: step 2/3. Biotin-attachment subunit of the 3-methylcrotonyl-CoA carboxylase, an enzyme that catalyzes the conversion of 3-methylcrotonyl-CoA to 3-methylglutaconyl-CoA, a critical step for leucine and isovaleric acid catabolism. The chain is Methylcrotonoyl-CoA carboxylase subunit alpha, mitochondrial (Mccc1) from Mus musculus (Mouse).